The chain runs to 121 residues: Small ribosomal subunit protein uS13 (121 aa).

The disordered stretch occupies residues 94–121 (GLPVRGQSSKTNARTVKGPRKTVANKKK). Residues 110 to 121 (KGPRKTVANKKK) show a composition bias toward basic residues.

The protein belongs to the universal ribosomal protein uS13 family. Part of the 30S ribosomal subunit. Forms a loose heterodimer with protein S19. Forms two bridges to the 50S subunit in the 70S ribosome.

Its function is as follows. Located at the top of the head of the 30S subunit, it contacts several helices of the 16S rRNA. In the 70S ribosome it contacts the 23S rRNA (bridge B1a) and protein L5 of the 50S subunit (bridge B1b), connecting the 2 subunits; these bridges are implicated in subunit movement. Contacts the tRNAs in the A and P-sites. In Mesoplasma florum (strain ATCC 33453 / NBRC 100688 / NCTC 11704 / L1) (Acholeplasma florum), this protein is Small ribosomal subunit protein uS13.